The following is a 406-amino-acid chain: Phosphopentomutase (406 aa).

Residues aspartate 10, aspartate 305, histidine 310, aspartate 346, histidine 347, and histidine 358 each contribute to the Mn(2+) site.

This sequence belongs to the phosphopentomutase family. Requires Mn(2+) as cofactor.

Its subcellular location is the cytoplasm. It carries out the reaction 2-deoxy-alpha-D-ribose 1-phosphate = 2-deoxy-D-ribose 5-phosphate. The catalysed reaction is alpha-D-ribose 1-phosphate = D-ribose 5-phosphate. It participates in carbohydrate degradation; 2-deoxy-D-ribose 1-phosphate degradation; D-glyceraldehyde 3-phosphate and acetaldehyde from 2-deoxy-alpha-D-ribose 1-phosphate: step 1/2. Isomerase that catalyzes the conversion of deoxy-ribose 1-phosphate (dRib-1-P) and ribose 1-phosphate (Rib-1-P) to deoxy-ribose 5-phosphate (dRib-5-P) and ribose 5-phosphate (Rib-5-P), respectively. The polypeptide is Phosphopentomutase (Agrobacterium fabrum (strain C58 / ATCC 33970) (Agrobacterium tumefaciens (strain C58))).